The sequence spans 258 residues: TLC domain-containing protein 4-A (258 aa).

The next 6 helical transmembrane spans lie at 5–25 (LISY…FSAI), 52–72 (FVST…LAYD), 85–105 (FWVK…LLLL), 116–132 (YMVC…GYVL), 171–191 (PVLL…IAVI), and 212–232 (IGPQ…NVFW). The region spanning 43-245 (GKQCEWDSRF…IARGFYKVVK (203 aa)) is the TLC domain.

Belongs to the TLCD4 family.

The protein localises to the membrane. In Xenopus laevis (African clawed frog), this protein is TLC domain-containing protein 4-A (tlcd4-a).